The chain runs to 274 residues: Large ribosomal subunit protein uL2cz/uL2cy (274 aa).

Disordered regions lie at residues 1–21 and 225–274; these read MAIH…VDSQ and PVDH…RRSK.

It belongs to the universal ribosomal protein uL2 family. Part of the 50S ribosomal subunit.

The protein localises to the plastid. Its subcellular location is the chloroplast. This Arabidopsis thaliana (Mouse-ear cress) protein is Large ribosomal subunit protein uL2cz/uL2cy (rpl2-A).